The chain runs to 523 residues: Solute carrier family 35 member F5 (523 aa).

Transmembrane regions (helical) follow at residues 69–89 and 101–121; these read MALGIVILLLVDVIWVASSEL and FFSTFAKTSMFVLYLLGFIIW. The residue at position 207 (Ser207) is a Phosphoserine. 8 helical membrane-spanning segments follow: residues 243 to 263, 268 to 288, 296 to 316, 327 to 347, 361 to 381, 395 to 415, 420 to 440, and 452 to 472; these read ISFFFCFVWFLANLSYQEALS, AIVNILSSTSGLFTLILAAVF, FTLSKLLAVILSIGGVVLVNL, TIGSIWSLAGAMLYAVYIVMI, MFFGFVGLFNLLLLWPGFFLL, VVLMCIIINGLIGTVLSEFLW, FLTSSLIGTLALSLTIPLSII, and WLFFAGAIPVFFSFFIVTLLC. In terms of domain architecture, EamA spans 252-316; sequence FLANLSYQEA…SIGGVVLVNL (65 aa).

This sequence belongs to the SLC35F solute transporter family.

The protein resides in the membrane. In terms of biological role, putative solute transporter. In Pongo abelii (Sumatran orangutan), this protein is Solute carrier family 35 member F5 (SLC35F5).